Consider the following 240-residue polypeptide: Probable transcriptional regulatory protein PBPRB1582 (240 aa).

Belongs to the TACO1 family.

Its subcellular location is the cytoplasm. This Photobacterium profundum (strain SS9) protein is Probable transcriptional regulatory protein PBPRB1582.